Consider the following 459-residue polypeptide: Cysteine--tRNA ligase (459 aa).

Cys28 provides a ligand contact to Zn(2+). A 'HIGH' region motif is present at residues 30–40 (VTIYDLCHIGH). Zn(2+)-binding residues include Cys209, His234, and Glu238. The 'KMSKS' region signature appears at 266-270 (KMSKS). Residue Lys269 coordinates ATP.

Belongs to the class-I aminoacyl-tRNA synthetase family. Monomer. Zn(2+) serves as cofactor.

It localises to the cytoplasm. It catalyses the reaction tRNA(Cys) + L-cysteine + ATP = L-cysteinyl-tRNA(Cys) + AMP + diphosphate. This is Cysteine--tRNA ligase from Shewanella amazonensis (strain ATCC BAA-1098 / SB2B).